Reading from the N-terminus, the 38-residue chain is Photosystem II reaction center protein L (38 aa).

A helical transmembrane segment spans residues 17-37 (SLYWGLLLIFVLAVLFSSYIF).

The protein belongs to the PsbL family. As to quaternary structure, PSII is composed of 1 copy each of membrane proteins PsbA, PsbB, PsbC, PsbD, PsbE, PsbF, PsbH, PsbI, PsbJ, PsbK, PsbL, PsbM, PsbT, PsbY, PsbZ, Psb30/Ycf12, at least 3 peripheral proteins of the oxygen-evolving complex and a large number of cofactors. It forms dimeric complexes.

Its subcellular location is the plastid. The protein localises to the chloroplast thylakoid membrane. One of the components of the core complex of photosystem II (PSII). PSII is a light-driven water:plastoquinone oxidoreductase that uses light energy to abstract electrons from H(2)O, generating O(2) and a proton gradient subsequently used for ATP formation. It consists of a core antenna complex that captures photons, and an electron transfer chain that converts photonic excitation into a charge separation. This subunit is found at the monomer-monomer interface and is required for correct PSII assembly and/or dimerization. The protein is Photosystem II reaction center protein L of Euglena gracilis.